Reading from the N-terminus, the 204-residue chain is Recombination protein RecR (204 aa).

The segment at 58–75 (CSVCQNITDVGVDPCALC) adopts a C4-type zinc-finger fold. In terms of domain architecture, Toprim spans 83 to 181 (SVICVVESPV…HVTKIARGIP (99 aa)).

It belongs to the RecR family.

Functionally, may play a role in DNA repair. It seems to be involved in an RecBC-independent recombinational process of DNA repair. It may act with RecF and RecO. The sequence is that of Recombination protein RecR from Pelodictyon phaeoclathratiforme (strain DSM 5477 / BU-1).